Here is a 470-residue protein sequence, read N- to C-terminus: Aspartyl aminopeptidase (470 aa).

His92 is a Zn(2+) binding site. His166 serves as a coordination point for substrate. Residue Asp263 participates in Zn(2+) binding. Glu299 serves as a coordination point for substrate. Zn(2+) contacts are provided by Glu300 and Asp343. Substrate-binding residues include Asp343, His346, Lys371, and Tyr378. His437 serves as a coordination point for Zn(2+).

The protein belongs to the peptidase M18 family. In terms of assembly, tetrahedron-shaped homododecamer built from six homodimers. It depends on Zn(2+) as a cofactor. In terms of tissue distribution, expressed in various cell types and tissues including the pharynx, neurons, body wall muscle, intestine and vulva.

The protein resides in the cytoplasm. The protein localises to the cytosol. It carries out the reaction Release of an N-terminal aspartate or glutamate from a peptide, with a preference for aspartate.. Aminopeptidase with specificity towards an acidic amino acid at the N-terminus. Plays a role in membrane trafficking and is specifically involved in the recycling and degradation of endocytic cargo. The protein is Aspartyl aminopeptidase of Caenorhabditis elegans.